The primary structure comprises 156 residues: 6,7-dimethyl-8-ribityllumazine synthase (156 aa).

Residues phenylalanine 25, 59-61, and 83-85 each bind 5-amino-6-(D-ribitylamino)uracil; these read AWE and AVI. 88–89 contacts (2S)-2-hydroxy-3-oxobutyl phosphate; sequence ST. Histidine 91 functions as the Proton donor in the catalytic mechanism. Asparagine 116 provides a ligand contact to 5-amino-6-(D-ribitylamino)uracil. Residue arginine 130 participates in (2S)-2-hydroxy-3-oxobutyl phosphate binding.

This sequence belongs to the DMRL synthase family. As to quaternary structure, forms an icosahedral capsid composed of 60 subunits, arranged as a dodecamer of pentamers.

The enzyme catalyses (2S)-2-hydroxy-3-oxobutyl phosphate + 5-amino-6-(D-ribitylamino)uracil = 6,7-dimethyl-8-(1-D-ribityl)lumazine + phosphate + 2 H2O + H(+). The protein operates within cofactor biosynthesis; riboflavin biosynthesis; riboflavin from 2-hydroxy-3-oxobutyl phosphate and 5-amino-6-(D-ribitylamino)uracil: step 1/2. Catalyzes the formation of 6,7-dimethyl-8-ribityllumazine by condensation of 5-amino-6-(D-ribitylamino)uracil with 3,4-dihydroxy-2-butanone 4-phosphate. This is the penultimate step in the biosynthesis of riboflavin. This is 6,7-dimethyl-8-ribityllumazine synthase from Acinetobacter baylyi (strain ATCC 33305 / BD413 / ADP1).